The following is an 860-amino-acid chain: Leucine--tRNA ligase (860 aa).

Residues 42–52 (PYPSGRLHMGH) carry the 'HIGH' region motif. The 'KMSKS' region motif lies at 619–623 (KMSKS). An ATP-binding site is contributed by Lys-622.

The protein belongs to the class-I aminoacyl-tRNA synthetase family.

The protein localises to the cytoplasm. The enzyme catalyses tRNA(Leu) + L-leucine + ATP = L-leucyl-tRNA(Leu) + AMP + diphosphate. The sequence is that of Leucine--tRNA ligase from Histophilus somni (strain 2336) (Haemophilus somnus).